Reading from the N-terminus, the 227-residue chain is UPF0173 metal-dependent hydrolase BPUM_2573 (227 aa).

This sequence belongs to the UPF0173 family.

This chain is UPF0173 metal-dependent hydrolase BPUM_2573, found in Bacillus pumilus (strain SAFR-032).